The primary structure comprises 504 residues: Patatin-like phospholipase domain-containing protein 2 (504 aa).

Topologically, residues Met1 to Trp8 are cytoplasmic. The chain crosses the membrane as a helical span at residues Asn9 to Leu29. A PNPLA domain is found at Ile10–Lys179. The GXGXXG signature appears at Gly14 to Gly19. Topologically, residues Arg30–His42 are extracellular. Asn39 carries an N-linked (GlcNAc...) asparagine glycan. The helical transmembrane segment at Ile43–Gly63 threads the bilayer. The GXSXG motif lies at Gly45–Gly49. Ser47 serves as the catalytic Nucleophile. Topologically, residues Glu64–Glu137 are cytoplasmic. Lys92 participates in a covalent cross-link: Glycyl lysine isopeptide (Lys-Gly) (interchain with G-Cter in ubiquitin). A helical membrane pass occupies residues Leu138–Ser158. The Extracellular portion of the chain corresponds to Leu159 to Arg329. Asp166 serves as the catalytic Proton acceptor. A DGA/G motif is present at residues Asp166 to Gly168. A helical membrane pass occupies residues Leu330 to Ile350. Residues Arg351–Leu504 lie on the Cytoplasmic side of the membrane. At Ser372 the chain carries Phosphoserine; in vitro. Ser404 bears the Phosphoserine; by PKA and FAM20C mark. Ser428 bears the Phosphoserine mark. The segment at Ala463–Ala492 is disordered.

Interacts with ABHD5; this association stimulates PNPLA2 triglyceride hydrolase activity. Interacts with SERPINF1; this interaction stimulates the phospholipase A2 activity of PNPLA2. Despite a colocalization in lipid droplets, it probably does not interact with PLIN. Interacts with PLIN5; prevents interaction with ABHD5. Interacts with FAF2. In terms of processing, phosphorylation at Ser-404 by PKA is increased during fasting and moderate intensity exercise, and moderately increases lipolytic activity. Phosphorylation at Ser-404 is increased upon beta-adrenergic stimulation. Post-translationally, ubiquitinated by PEX2 in response to reactive oxygen species (ROS), leading to its degradation. Ubiquitination is stimulated by LDAH. In terms of tissue distribution, highest expression in adipose tissue. Also detected in heart, skeletal muscle, and portions of the gastrointestinal tract. Detected in normal retina and retinoblastoma cells. Detected in retinal pigment epithelium and, at lower intensity, in the inner segments of photoreceptors and in the ganglion cell layer of the neural retina (at protein level).

It localises to the lipid droplet. It is found in the cell membrane. The protein localises to the cytoplasm. It carries out the reaction a triacylglycerol + H2O = a diacylglycerol + a fatty acid + H(+). The catalysed reaction is a triacylglycerol + H2O = a 1,2-diacylglycerol + a fatty acid + H(+). The enzyme catalyses a triacylglycerol + H2O = a 1,3-diacylglycerol + a fatty acid + H(+). It catalyses the reaction a triacyl-sn-glycerol + H2O = a 1,3-diacyl-sn-glycerol + a fatty acid + H(+). It carries out the reaction a triacyl-sn-glycerol + H2O = a 2,3-diacyl-sn-glycerol + a fatty acid + H(+). The catalysed reaction is a 1-acylglycerol + a 1,3-diacylglycerol = a triacylglycerol + glycerol. The enzyme catalyses a 1-acylglycerol + a 1,2-diacylglycerol = a triacylglycerol + glycerol. It catalyses the reaction 2 a 1-acylglycerol = a 1,2-diacylglycerol + glycerol. It carries out the reaction a triacylglycerol + all-trans-retinol = an all-trans-retinyl ester + a diacylglycerol. The catalysed reaction is 1,2-di-(9Z-octadecenoyl)-glycerol + (9Z)-octadecenoate + H(+) = 1,2,3-tri-(9Z-octadecenoyl)-glycerol + H2O. The enzyme catalyses 1,2,3-tri-(9Z-octadecenoyl)-glycerol + H2O = 1,3-di-(9Z-octadecenoyl)-glycerol + (9Z)-octadecenoate + H(+). It catalyses the reaction 1-(9Z-octadecenoyl)-glycerol + 1,3-di-(9Z-octadecenoyl)-glycerol = 1,2,3-tri-(9Z-octadecenoyl)-glycerol + glycerol. It carries out the reaction 1-(9Z-octadecenoyl)-glycerol + 1,2-di-(9Z-octadecenoyl)-glycerol = 1,2,3-tri-(9Z-octadecenoyl)-glycerol + glycerol. The catalysed reaction is 2 1-(9Z-octadecenoyl)-glycerol = 1,2-di-(9Z-octadecenoyl)-glycerol + glycerol. The enzyme catalyses 1,2,3-tri-(9Z-octadecenoyl)-glycerol + all-trans-retinol = all-trans-retinyl 9Z-octadecenoate + di-(9Z)-octadecenoylglycerol. It catalyses the reaction 1,2,3-tri-(9Z)-hexadecenoylglycerol + H2O = 1,3-di-(9Z)-hexadecenoylglycerol + (9Z)-hexadecenoate + H(+). It carries out the reaction 1,2,3-tri-(9Z,12Z)-octadecadienoylglycerol + H2O = 1,3-di-(9Z,12Z)-octadecadienoylglycerol + (9Z,12Z)-octadecadienoate + H(+). The catalysed reaction is 1,2,3-tri-(9Z,12Z,15Z)-octadecatrienoylglycerol + H2O = 1,3-di-(9Z,12Z,15Z)-octadecatrienoylglycerol + (9Z,12Z,15Z)-octadecatrienoate + H(+). The enzyme catalyses 1,3-di-(9Z)-octadecenoyl-2-hexadecanoylglycerol + H2O = 1,3-di-(9Z-octadecenoyl)-glycerol + hexadecanoate + H(+). It catalyses the reaction 1,2-di-(9Z)-octadecenoyl-3-hexadecanoyl-sn-glycerol + H2O = 1-(9Z)-octadecenoyl-3-hexadecanoyl-sn-glycerol + (9Z)-octadecenoate + H(+). It carries out the reaction 1-hexadecanoyl-2,3-di-(9Z)-octadecenoyl-sn-glycerol + H2O = 1-hexadecanoyl-3-(9Z)-octadecenoyl-sn-glycerol + (9Z)-octadecenoate + H(+). The catalysed reaction is 1,2,3-tri-(9Z-octadecenoyl)-glycerol + H2O = 2,3-di-(9Z)-octadecenoyl-sn-glycerol + (9Z)-octadecenoate + H(+). The enzyme catalyses 1,2,3-tri-(9Z)-hexadecenoylglycerol + H2O = 2,3-di-(9Z)-hexadecenoyl-sn-glycerol + (9Z)-hexadecenoate + H(+). It catalyses the reaction 1,2,3-tri-(9Z,12Z)-octadecadienoylglycerol + H2O = 2,3-di-(9Z,12Z)-octadecadienoyl-sn-glycerol + (9Z,12Z)-octadecadienoate + H(+). It carries out the reaction 1,2,3-tri-(9Z,12Z,15Z)-octadecatrienoylglycerol + H2O = 2,3-di-(9Z,12Z,15Z)-octadecatrienoyl-sn-glycerol + (9Z,12Z,15Z)-octadecatrienoate + H(+). The catalysed reaction is 1,3-di-(9Z)-octadecenoyl-2-hexadecanoylglycerol + H2O = 2-hexadecanoyl-3-(9Z)-octadecenoyl-sn-glycerol + (9Z)-octadecenoate + H(+). The enzyme catalyses 1-hexadecanoyl-2,3-di-(9Z)-octadecenoyl-sn-glycerol + H2O = 2,3-di-(9Z)-octadecenoyl-sn-glycerol + hexadecanoate + H(+). It catalyses the reaction 1,2-di-(9Z)-octadecenoyl-3-hexadecanoyl-sn-glycerol + H2O = 2-(9Z-octadecenoyl)-3-hexadecanoyl-sn-glycerol + (9Z)-octadecenoate + H(+). It carries out the reaction a 1,2-diacyl-sn-glycero-3-phosphocholine + H2O = a 1-acyl-sn-glycero-3-phosphocholine + a fatty acid + H(+). The catalysed reaction is 1,2,3-tri-(9Z-octadecenoyl)-glycerol + 9-hydroxy-octadecanoate = 9-(9Z-octadecenoyloxy)-octadecanoate + 2,3-di-(9Z)-octadecenoyl-sn-glycerol. The enzyme catalyses 1-hexadecanoyl-2,3-di-(9Z)-octadecenoyl-sn-glycerol + 9-hydroxy-octadecanoate = 9-hexadecanoyloxy-octadecanoate + 2,3-di-(9Z)-octadecenoyl-sn-glycerol. It catalyses the reaction 1,2,3-tri-(10Z)-heptadecenoylglycerol + 9-hydroxy-octadecanoate = 2,3-di-(10Z-heptadecenoyl)-sn-glycerol + 9-(10Z-heptadecenoyloxy)-octadecanoate. It carries out the reaction 1,2,3-tri-(9Z,12Z)-octadecadienoylglycerol + 9-hydroxy-octadecanoate = 2,3-di-(9Z,12Z)-octadecadienoyl-sn-glycerol + 9-(9Z,12Z-octadecadienoyloxy)-octadecanoate. The catalysed reaction is 1,2,3-tri-(9Z)-hexadecenoylglycerol + 9-hydroxy-octadecanoate = 2,3-di-(9Z)-hexadecenoyl-sn-glycerol + 9-(9Z-hexadecenoyloxy)-octadecanoate. The enzyme catalyses 9-hydroxy-octadecanoate + 1,2-di-(9Z-octadecenoyl)-sn-glycerol = 9-(9Z-octadecenoyloxy)-octadecanoate + 2-(9Z-octadecenoyl)-glycerol. It catalyses the reaction 1-hexadecanoyl-2,3-di-(9Z)-octadecenoyl-sn-glycerol + 9-hydroxy-octadecanoate = 1-hexadecanoyl-3-(9Z)-octadecenoyl-sn-glycerol + 9-(9Z-octadecenoyloxy)-octadecanoate. Its pathway is glycerolipid metabolism; triacylglycerol degradation. The triglyceride lipase activity is inhibited by BEL ((E)-6-(bromomethylene)-3-(1-naphthalenyl)-2H-tetrahydropyran-2-one), a suicide substrate inhibitor. No differences in the acylglycerol transacylase was detected in the presence or absence of ATP. Functionally, catalyzes the initial step in triglyceride hydrolysis in adipocyte and non-adipocyte lipid droplets. Exhibits a strong preference for the hydrolysis of long-chain fatty acid esters at the sn-2 position of the glycerol backbone and acts coordinately with LIPE/HLS and DGAT2 within the lipolytic cascade. Also possesses acylglycerol transacylase and phospholipase A2 activities. Transfers fatty acid from triglyceride to retinol, hydrolyzes retinylesters, and generates 1,3-diacylglycerol from triglycerides. Regulates adiposome size and may be involved in the degradation of adiposomes. Catalyzes the formation of an ester bond between hydroxy fatty acids and fatty acids derived from triglycerides or diglycerides to generate fatty acid esters of hydroxy fatty acids (FAHFAs) in adipocytes. Acts antagonistically with LDAH in regulation of cellular lipid stores. Inhibits LDAH-stimulated lipid droplet fusion. May play an important role in energy homeostasis. May play a role in the response of the organism to starvation, enhancing hydrolysis of triglycerides and providing free fatty acids to other tissues to be oxidized in situations of energy depletion. The sequence is that of Patatin-like phospholipase domain-containing protein 2 from Homo sapiens (Human).